Consider the following 207-residue polypeptide: Dephospho-CoA kinase (207 aa).

The 198-residue stretch at 5–202 (VVGLTGGIGS…LQYLKLSAEK (198 aa)) folds into the DPCK domain. 13-18 (GSGKST) serves as a coordination point for ATP.

It belongs to the CoaE family.

It localises to the cytoplasm. The enzyme catalyses 3'-dephospho-CoA + ATP = ADP + CoA + H(+). Its pathway is cofactor biosynthesis; coenzyme A biosynthesis; CoA from (R)-pantothenate: step 5/5. Catalyzes the phosphorylation of the 3'-hydroxyl group of dephosphocoenzyme A to form coenzyme A. This is Dephospho-CoA kinase from Dechloromonas aromatica (strain RCB).